The chain runs to 305 residues: Acyl transferase (305 aa).

Active-site charge relay system residues include S114, D211, and H241.

This sequence belongs to the LuxD family.

It functions in the pathway lipid metabolism; fatty acid reduction for biolumincescence. Acyl transferase is part of the fatty acid reductase system required for aldehyde biosynthesis; it produces fatty acids for the luminescent reaction. This Vibrio campbellii (strain ATCC BAA-1116) protein is Acyl transferase.